The chain runs to 312 residues: DNA-directed RNA polymerase subunit alpha (312 aa).

Residues M1 to T226 form an alpha N-terminal domain (alpha-NTD) region. The segment at D244–K312 is alpha C-terminal domain (alpha-CTD).

The protein belongs to the RNA polymerase alpha chain family. In terms of assembly, homodimer. The RNAP catalytic core consists of 2 alpha, 1 beta, 1 beta' and 1 omega subunit. When a sigma factor is associated with the core the holoenzyme is formed, which can initiate transcription.

The enzyme catalyses RNA(n) + a ribonucleoside 5'-triphosphate = RNA(n+1) + diphosphate. Its function is as follows. DNA-dependent RNA polymerase catalyzes the transcription of DNA into RNA using the four ribonucleoside triphosphates as substrates. This chain is DNA-directed RNA polymerase subunit alpha, found in Streptococcus gordonii (strain Challis / ATCC 35105 / BCRC 15272 / CH1 / DL1 / V288).